The sequence spans 335 residues: tRNA methyltransferase 10 homolog A (335 aa).

2 disordered regions span residues 1-91 (MSSE…DRKR) and 279-335 (VPAH…PDPQ). Phosphoserine is present on residues serine 22 and serine 24. The segment covering 52–62 (RLWEEQREQRK) has biased composition (basic and acidic residues). A coiled-coil region spans residues 52 to 84 (RLWEEQREQRKEKRKEKRKRKKLERRCQLESNS). The segment covering 63-75 (EKRKEKRKRKKLE) has biased composition (basic residues). Residues 88 to 279 (DRKRIRRHVA…TILPPRKGAV (192 aa)) enclose the SAM-dependent MTase TRM10-type domain. A compositionally biased stretch (basic and acidic residues) spans 304 to 319 (EGEHGRDDPGSPHKEQ). Over residues 320–335 (QGQQSSSVSAVSPDPQ) the composition is skewed to low complexity. At serine 331 the chain carries Phosphoserine.

The protein belongs to the class IV-like SAM-binding methyltransferase superfamily. TRM10 family. In terms of assembly, interacts with tRNA. Ubiquitously expressed. Is more abundant in brain and pancreatic islets compared to other tissues (at protein level).

The protein resides in the nucleus. The protein localises to the nucleolus. The enzyme catalyses guanosine(9) in tRNA + S-adenosyl-L-methionine = N(1)-methylguanosine(9) in tRNA + S-adenosyl-L-homocysteine + H(+). S-adenosyl-L-methionine-dependent guanine N(1)-methyltransferase that catalyzes the formation of N(1)-methylguanine at position 9 (m1G9) in tRNAs. Probably not able to catalyze formation of N(1)-methyladenine at position 9 (m1A9) in tRNAs. The polypeptide is tRNA methyltransferase 10 homolog A (Trmt10a) (Rattus norvegicus (Rat)).